Reading from the N-terminus, the 238-residue chain is MKVDVIISADYITDDIVKDKVVVVIDMFRATSVITTAINNGCQKVIPYLTVEETLEEAKKYDKSEVILGGERRAVKIEGFDLSNSPLEYTEKVVKNKTVLMTTTNGTRALTKCLPGKKIIIAAMINAEAVAKKLLEFNDDIVIVNAGTNGEFSMDDYICGGYIINTMLKEKSNIELTDISKTSNMIYESNKDIINYVKEARHYSVMRSLKLDNDIKYCIKKSIVDVVPIYDGDKIIKL.

It belongs to the ComB family. Requires Mg(2+) as cofactor.

It carries out the reaction (2R)-O-phospho-3-sulfolactate + H2O = (2R)-3-sulfolactate + phosphate. The chain is Probable 2-phosphosulfolactate phosphatase from Clostridium botulinum (strain Alaska E43 / Type E3).